We begin with the raw amino-acid sequence, 854 residues long: Cell division control protein 24 (854 aa).

The span at M1–S14 shows a compositional bias: polar residues. Positions M1–S24 are disordered. Residues P135–P246 form the Calponin-homology (CH) domain. Residues E278–N454 form the DH domain. Positions R478–H668 constitute a PH domain. 2 disordered regions span residues I542–I571 and Q674–E745. Low complexity predominate over residues S682 to H707. The PB1 domain maps to S761–Y854.

As to quaternary structure, interacts with AXL2.

Promotes the exchange of CDC42-bound GDP by GTP. Controls the polarity of calmodulin, and the calcium regulatory process of bud emergence. CDC24 may be involved in the initial selection and organization of the budding site. This chain is Cell division control protein 24 (CDC24), found in Saccharomyces cerevisiae (strain ATCC 204508 / S288c) (Baker's yeast).